The following is a 118-amino-acid chain: Transcription factor PAR1 (118 aa).

A disordered region spans residues 1–58 (MEETLATPDATRRSLSPSCSATVKSRAAGFERRTKRRLSETNASVREDREEAEEEEDE). Over residues 13-23 (RSLSPSCSATV) the composition is skewed to polar residues. A bHLH domain is found at 43–92 (ASVREDREEAEEEEDEVKEKIEALQRIIPGGAALGVDALFEETAGYILSL).

Belongs to the bHLH protein family. As to quaternary structure, homodimer.

Its subcellular location is the nucleus. Atypical bHLH transcription factor that acts as a negative regulator of a variety of shade avoidance syndrome (SAS) responses, including seedling elongation and photosynthetic pigment accumulation. Acts as a direct transcriptional repressor of two auxin-responsive genes, SAUR15 and SAUR68. May function in integrating shade and hormone transcriptional networks in response to light and auxin changes. The sequence is that of Transcription factor PAR1 (PAR1) from Arabidopsis thaliana (Mouse-ear cress).